The chain runs to 44 residues: Conotoxin S5.1 (44 aa).

Post-translationally, contains 3 disulfide bonds. As to expression, expressed by the venom duct.

The protein resides in the secreted. In Conus striatus (Striated cone), this protein is Conotoxin S5.1.